Reading from the N-terminus, the 370-residue chain is MNWKKYINRFKSRDLSENGLPTSILLIIGIIVVSIIVDLFIQKSLLLVPLISSIIISAIITKWGIIKLKKINCRQVVRKEGPSGHFQKSGTPSMGGIFIVPISLILTNLFALSNNTFSKQLVALSFLSLAYMLIGLIDDWQSITLKRNKGLSVKSKVILQTIVGIIFLVLIYSQDLNNTDILIFGNNTINLGLLFWPIALFILLAESNATNLTDGLDGLASGCGAIVFTGLAIELIIRGNNENYAIASFCITMAGAWLGFLIFNRKPAKVFMGDTGSLAMGASLAGVALLTNTLWSLLIMGVIFLAESVSVIIQVGVFKTTKKIIGKGYRVFNMAPLHHHFELEGTKETIIVQNFWLITICFVCMAIMLR.

The next 11 membrane-spanning stretches (helical) occupy residues 21-41 (PTSI…DLFI), 46-66 (LLVP…WGII), 92-112 (PSMG…LFAL), 117-137 (FSKQ…IGLI), 151-171 (LSVK…LVLI), 181-201 (ILIF…IALF), 217-237 (DGLA…ELII), 243-263 (NYAI…FLIF), 270-290 (VFMG…VALL), 298-318 (LIMG…VGVF), and 349-369 (TIIV…AIML).

It belongs to the glycosyltransferase 4 family. MraY subfamily. Mg(2+) is required as a cofactor.

Its subcellular location is the cell inner membrane. It catalyses the reaction UDP-N-acetyl-alpha-D-muramoyl-L-alanyl-gamma-D-glutamyl-meso-2,6-diaminopimeloyl-D-alanyl-D-alanine + di-trans,octa-cis-undecaprenyl phosphate = di-trans,octa-cis-undecaprenyl diphospho-N-acetyl-alpha-D-muramoyl-L-alanyl-D-glutamyl-meso-2,6-diaminopimeloyl-D-alanyl-D-alanine + UMP. The protein operates within cell wall biogenesis; peptidoglycan biosynthesis. Catalyzes the initial step of the lipid cycle reactions in the biosynthesis of the cell wall peptidoglycan: transfers peptidoglycan precursor phospho-MurNAc-pentapeptide from UDP-MurNAc-pentapeptide onto the lipid carrier undecaprenyl phosphate, yielding undecaprenyl-pyrophosphoryl-MurNAc-pentapeptide, known as lipid I. The sequence is that of Phospho-N-acetylmuramoyl-pentapeptide-transferase from Prochlorococcus marinus (strain SARG / CCMP1375 / SS120).